The primary structure comprises 117 residues: Large ribosomal subunit protein uL22 (117 aa).

It belongs to the universal ribosomal protein uL22 family. As to quaternary structure, part of the 50S ribosomal subunit.

This protein binds specifically to 23S rRNA; its binding is stimulated by other ribosomal proteins, e.g. L4, L17, and L20. It is important during the early stages of 50S assembly. It makes multiple contacts with different domains of the 23S rRNA in the assembled 50S subunit and ribosome. Functionally, the globular domain of the protein is located near the polypeptide exit tunnel on the outside of the subunit, while an extended beta-hairpin is found that lines the wall of the exit tunnel in the center of the 70S ribosome. In Lactobacillus gasseri (strain ATCC 33323 / DSM 20243 / BCRC 14619 / CIP 102991 / JCM 1131 / KCTC 3163 / NCIMB 11718 / NCTC 13722 / AM63), this protein is Large ribosomal subunit protein uL22.